Reading from the N-terminus, the 72-residue chain is Translation initiation factor IF-1 (72 aa).

The 72-residue stretch at 1 to 72 (MSKDDVIQMQ…SRARIVFRAK (72 aa)) folds into the S1-like domain.

The protein belongs to the IF-1 family. Component of the 30S ribosomal translation pre-initiation complex which assembles on the 30S ribosome in the order IF-2 and IF-3, IF-1 and N-formylmethionyl-tRNA(fMet); mRNA recruitment can occur at any time during PIC assembly.

The protein localises to the cytoplasm. Functionally, one of the essential components for the initiation of protein synthesis. Stabilizes the binding of IF-2 and IF-3 on the 30S subunit to which N-formylmethionyl-tRNA(fMet) subsequently binds. Helps modulate mRNA selection, yielding the 30S pre-initiation complex (PIC). Upon addition of the 50S ribosomal subunit IF-1, IF-2 and IF-3 are released leaving the mature 70S translation initiation complex. In Albidiferax ferrireducens (strain ATCC BAA-621 / DSM 15236 / T118) (Rhodoferax ferrireducens), this protein is Translation initiation factor IF-1.